We begin with the raw amino-acid sequence, 145 residues long: uncharacterized protein (145 aa).

Residues 1–20 (MKTCTVICCTALVLGLTAYA) form the signal peptide.

This is an uncharacterized protein from Aedes vexans (Inland floodwater mosquito).